A 245-amino-acid chain; its full sequence is Octanoyltransferase (245 aa).

Residues 54–238 (GEATELVWLL…AFENIFGETR (185 aa)) enclose the BPL/LPL catalytic domain. Substrate-binding positions include 92–99 (RGGQLTYH), 167–169 (AIG), and 180–182 (GIA). The Acyl-thioester intermediate role is filled by Cys198.

It belongs to the LipB family.

It is found in the cytoplasm. The enzyme catalyses octanoyl-[ACP] + L-lysyl-[protein] = N(6)-octanoyl-L-lysyl-[protein] + holo-[ACP] + H(+). It participates in protein modification; protein lipoylation via endogenous pathway; protein N(6)-(lipoyl)lysine from octanoyl-[acyl-carrier-protein]: step 1/2. In terms of biological role, catalyzes the transfer of endogenously produced octanoic acid from octanoyl-acyl-carrier-protein onto the lipoyl domains of lipoate-dependent enzymes. Lipoyl-ACP can also act as a substrate although octanoyl-ACP is likely to be the physiological substrate. This chain is Octanoyltransferase, found in Rhodopseudomonas palustris (strain ATCC BAA-98 / CGA009).